We begin with the raw amino-acid sequence, 297 residues long: HTH-type transcriptional regulator AceR (297 aa).

In terms of domain architecture, HTH lysR-type spans 1–60 (MNINQEQLLMFQAVMETGSFSAAARKLGKVPSAVSMSIANLEIDLNLTLFERKGREPTPT). A DNA-binding region (H-T-H motif) is located at residues 20–39 (FSAAARKLGKVPSAVSMSIA).

Belongs to the LysR transcriptional regulatory family. In terms of assembly, homodimer and homotetramer. Binding of chlorhexidine at the inducer-binding domain causes a quaternary structural change that favors interactions between dimers to form tetramers.

It is found in the cytoplasm. Functionally, regulates the expression of the AceI transporter. Binds DNA and chlorhexidine. Binds to regulatory sites within the intergenic region between the aceI and aceR genes, and affects the interaction between RNA polymerase (RNAP) and promoter DNA both in the presence and in the absence of chlorhexidine. In the absence of chlorhexidine, prevents transcription of the aceI gene by disrupting interactions between the promoter DNA and RNAP. In the presence of chlorhexidine, activates expression of aceI. When AceR interacts with chlorhexidine, it undergoes a conformational change and the tetrameric form either releases the DNA or shifts the position of the DNA-binding region to allow RNAP to bind onto the promoter DNA to proceed with aceI transcription. This chain is HTH-type transcriptional regulator AceR, found in Acinetobacter baumannii (strain ATCC 17978 / DSM 105126 / CIP 53.77 / LMG 1025 / NCDC KC755 / 5377).